The primary structure comprises 208 residues: 3-demethoxyubiquinol 3-hydroxylase (208 aa).

Positions 57, 87, 90, 139, 171, and 174 each coordinate Fe cation.

This sequence belongs to the COQ7 family. The cofactor is Fe cation.

It localises to the cell membrane. The enzyme catalyses a 5-methoxy-2-methyl-3-(all-trans-polyprenyl)benzene-1,4-diol + AH2 + O2 = a 3-demethylubiquinol + A + H2O. It participates in cofactor biosynthesis; ubiquinone biosynthesis. Functionally, catalyzes the hydroxylation of 2-nonaprenyl-3-methyl-6-methoxy-1,4-benzoquinol during ubiquinone biosynthesis. The chain is 3-demethoxyubiquinol 3-hydroxylase from Burkholderia mallei (strain NCTC 10229).